Consider the following 968-residue polypeptide: Glycine dehydrogenase (decarboxylating) (968 aa).

Lys-712 bears the N6-(pyridoxal phosphate)lysine mark.

Belongs to the GcvP family. In terms of assembly, the glycine cleavage system is composed of four proteins: P, T, L and H. Requires pyridoxal 5'-phosphate as cofactor.

It carries out the reaction N(6)-[(R)-lipoyl]-L-lysyl-[glycine-cleavage complex H protein] + glycine + H(+) = N(6)-[(R)-S(8)-aminomethyldihydrolipoyl]-L-lysyl-[glycine-cleavage complex H protein] + CO2. The glycine cleavage system catalyzes the degradation of glycine. The P protein binds the alpha-amino group of glycine through its pyridoxal phosphate cofactor; CO(2) is released and the remaining methylamine moiety is then transferred to the lipoamide cofactor of the H protein. In Prochlorococcus marinus (strain NATL1A), this protein is Glycine dehydrogenase (decarboxylating).